The following is a 219-amino-acid chain: ATP-dependent Clp protease proteolytic subunit 1 (219 aa).

The Nucleophile role is filled by Ser-113. His-138 is a catalytic residue.

This sequence belongs to the peptidase S14 family. In terms of assembly, fourteen ClpP subunits assemble into 2 heptameric rings which stack back to back to give a disk-like structure with a central cavity, resembling the structure of eukaryotic proteasomes.

The protein resides in the cytoplasm. The enzyme catalyses Hydrolysis of proteins to small peptides in the presence of ATP and magnesium. alpha-casein is the usual test substrate. In the absence of ATP, only oligopeptides shorter than five residues are hydrolyzed (such as succinyl-Leu-Tyr-|-NHMec, and Leu-Tyr-Leu-|-Tyr-Trp, in which cleavage of the -Tyr-|-Leu- and -Tyr-|-Trp bonds also occurs).. Its function is as follows. Cleaves peptides in various proteins in a process that requires ATP hydrolysis. Has a chymotrypsin-like activity. Plays a major role in the degradation of misfolded proteins. Probably partially responsible for degradation of ECF sigma factor SigR prime. This chain is ATP-dependent Clp protease proteolytic subunit 1, found in Streptomyces coelicolor (strain ATCC BAA-471 / A3(2) / M145).